The chain runs to 107 residues: Insulin (107 aa).

Positions 1–24 (MALWIRSLPLLALLVFSGPGTSYA) are cleaved as a signal peptide. 3 disulfides stabilise this stretch: Cys-31/Cys-93, Cys-43/Cys-106, and Cys-92/Cys-97. A propeptide spans 57–84 (DVEQPLVSSPLRGEAGVLPFQQEEYEKV) (c peptide).

The protein belongs to the insulin family. As to quaternary structure, heterodimer of a B chain and an A chain linked by two disulfide bonds.

The protein localises to the secreted. Its function is as follows. Insulin decreases blood glucose concentration. It increases cell permeability to monosaccharides, amino acids and fatty acids. It accelerates glycolysis, the pentose phosphate cycle, and glycogen synthesis in liver. This chain is Insulin (INS), found in Gallus gallus (Chicken).